Here is a 128-residue protein sequence, read N- to C-terminus: Gene 39 protein (128 aa).

The chain is Gene 39 protein (39) from Mycobacterium (Mycobacteriophage D29).